Here is a 391-residue protein sequence, read N- to C-terminus: Formate-dependent phosphoribosylglycinamide formyltransferase (391 aa).

N(1)-(5-phospho-beta-D-ribosyl)glycinamide-binding positions include 18-19 (EL) and Glu-78. Residues Arg-110, Lys-151, 156 to 161 (SSGKGQ), 191 to 194 (EEFI), and Glu-199 contribute to the ATP site. Residues 115-305 (DLASKDLKIK…EFELHLRAFL (191 aa)) enclose the ATP-grasp domain. Residues Glu-264 and Glu-276 each coordinate Mg(2+). Residues Asp-283, Lys-353, and 360-361 (RR) contribute to the N(1)-(5-phospho-beta-D-ribosyl)glycinamide site.

It belongs to the PurK/PurT family. Homodimer.

It catalyses the reaction N(1)-(5-phospho-beta-D-ribosyl)glycinamide + formate + ATP = N(2)-formyl-N(1)-(5-phospho-beta-D-ribosyl)glycinamide + ADP + phosphate + H(+). It participates in purine metabolism; IMP biosynthesis via de novo pathway; N(2)-formyl-N(1)-(5-phospho-D-ribosyl)glycinamide from N(1)-(5-phospho-D-ribosyl)glycinamide (formate route): step 1/1. In terms of biological role, involved in the de novo purine biosynthesis. Catalyzes the transfer of formate to 5-phospho-ribosyl-glycinamide (GAR), producing 5-phospho-ribosyl-N-formylglycinamide (FGAR). Formate is provided by PurU via hydrolysis of 10-formyl-tetrahydrofolate. The chain is Formate-dependent phosphoribosylglycinamide formyltransferase from Prochlorococcus marinus (strain AS9601).